We begin with the raw amino-acid sequence, 466 residues long: Cytochrome c-552 (466 aa).

A signal peptide spans 1–27 (MVRILTKKSFALSALVAASLMASGAMA). His-87 contacts heme c. Positions 115, 118, and 119 each coordinate heme. Residues Cys-153, Cys-156, His-157, Cys-195, Cys-198, and His-199 each coordinate heme c. Ca(2+) contacts are provided by Glu-201, Tyr-202, Lys-250, and Gln-252. Tyr-202 contributes to the substrate binding site. Position 253 (His-253) interacts with substrate. Heme c contacts are provided by His-264, Cys-271, Cys-274, His-275, His-290, Cys-303, Cys-306, His-307, and His-382.

Belongs to the cytochrome c-552 family. It depends on Ca(2+) as a cofactor. Heme c serves as cofactor.

Its subcellular location is the periplasm. The enzyme catalyses 6 Fe(III)-[cytochrome c] + NH4(+) + 2 H2O = 6 Fe(II)-[cytochrome c] + nitrite + 8 H(+). It participates in nitrogen metabolism; nitrate reduction (assimilation). Functionally, catalyzes the reduction of nitrite to ammonia, consuming six electrons in the process. This Shewanella woodyi (strain ATCC 51908 / MS32) protein is Cytochrome c-552.